Consider the following 212-residue polypeptide: Large ribosomal subunit protein uL3 (212 aa).

Residues 117-142 (TSKGKGFQGNIKRHNQSRGPMTHGSR) are disordered.

It belongs to the universal ribosomal protein uL3 family. In terms of assembly, part of the 50S ribosomal subunit. Forms a cluster with proteins L14 and L19.

One of the primary rRNA binding proteins, it binds directly near the 3'-end of the 23S rRNA, where it nucleates assembly of the 50S subunit. In Acholeplasma laidlawii (strain PG-8A), this protein is Large ribosomal subunit protein uL3.